Consider the following 349-residue polypeptide: Insulin gene enhancer protein isl-1 (349 aa).

LIM zinc-binding domains are found at residues 17–70 (CVGC…CKRD) and 79–133 (CAKC…RADH). Residues 181-240 (TTRVRTVLNEKQLHTLRTCYNANPRPDALMKEQLVEMTGLSPRVIRVWFQNKRCKDKKRS) constitute a DNA-binding region (homeobox). The interval 312–349 (VNFSEGGPGSNSTGSEVASMSSQLPDTPNSMVASPIEA) is disordered. Residues 321-343 (SNSTGSEVASMSSQLPDTPNSMV) show a composition bias toward polar residues.

Its subcellular location is the nucleus. DNA-binding transcriptional activator. Recognizes and binds to the consensus octamer binding site 5'-ATAATTAA-3' in promoter of target genes. Plays a fundamental role in the gene regulatory network essential for retinal ganglion cell (RGC) differentiation. May be involved in subtype specialization of primary motoneurons. May bind to insulin gene enhancer sequences. Essential for heart development. The polypeptide is Insulin gene enhancer protein isl-1 (isl1) (Danio rerio (Zebrafish)).